The primary structure comprises 244 residues: Gasdermin-like protein rcd-1-2 (244 aa).

The tract at residues 1–22 (MDNEEWFPLKQTHYPPPTIPSM) is disordered.

It belongs to the gasdermin family. Heterooligomer; the heterooligomer with rcd-1-1 forms a ring-shaped pore complex when inserted in the membrane.

The protein resides in the cytoplasm. It localises to the cell membrane. In terms of biological role, gasdermin-like protein involved in heterokaryon incompatibility, a process that ensures that during spontaneous vegetative cell fusion, only compatible cells from the same colony survive (non-self-recognition). In N.crassa, the rcd-1 locus exists as 2 incompatible alleles, rcd-1-1 (AC Q7SBA0) and rcd-1-2 (this entry). During the allorecognition process, forms a heterooligomer with rcd-1-1, thereby forming a functional gasdermin-like complex that binds to membranes and forms pores, triggering cell death. Binds negatively charged phospholipids, such as cardiolipin and phosphatidylserine. Also binds to phosphoinositides, preferentially to phosphatidylinositol-3-phosphate (PtdIns-3-P), PtdIns-5-P and PtdIns-3,5-P2. This chain is Gasdermin-like protein rcd-1-2, found in Neurospora crassa.